The sequence spans 176 residues: Large ribosomal subunit protein eL20A (176 aa).

The protein belongs to the eukaryotic ribosomal protein eL20 family. Component of the large ribosomal subunit (LSU). Mature yeast ribosomes consist of a small (40S) and a large (60S) subunit. The 40S small subunit contains 1 molecule of ribosomal RNA (18S rRNA) and at least 33 different proteins. The large 60S subunit contains 3 rRNA molecules (25S, 5.8S and 5S rRNA) and at least 46 different proteins. eL20 forms multiple interactions with RNA and proteins in the central protuberance, connecting components of core functional centers that are located far apart.

It is found in the cytoplasm. Component of the ribosome, a large ribonucleoprotein complex responsible for the synthesis of proteins in the cell. The small ribosomal subunit (SSU) binds messenger RNAs (mRNAs) and translates the encoded message by selecting cognate aminoacyl-transfer RNA (tRNA) molecules. The large subunit (LSU) contains the ribosomal catalytic site termed the peptidyl transferase center (PTC), which catalyzes the formation of peptide bonds, thereby polymerizing the amino acids delivered by tRNAs into a polypeptide chain. The nascent polypeptides leave the ribosome through a tunnel in the LSU and interact with protein factors that function in enzymatic processing, targeting, and the membrane insertion of nascent chains at the exit of the ribosomal tunnel. In Schizosaccharomyces pombe (strain 972 / ATCC 24843) (Fission yeast), this protein is Large ribosomal subunit protein eL20A (rpl2001).